The primary structure comprises 156 residues: Small ribosomal subunit protein uS7 (156 aa).

It belongs to the universal ribosomal protein uS7 family. Part of the 30S ribosomal subunit. Contacts proteins S9 and S11.

In terms of biological role, one of the primary rRNA binding proteins, it binds directly to 16S rRNA where it nucleates assembly of the head domain of the 30S subunit. Is located at the subunit interface close to the decoding center, probably blocks exit of the E-site tRNA. The protein is Small ribosomal subunit protein uS7 of Thermomicrobium roseum (strain ATCC 27502 / DSM 5159 / P-2).